A 281-amino-acid polypeptide reads, in one-letter code: Bis(5'-nucleosyl)-tetraphosphatase, symmetrical (281 aa).

The protein belongs to the Ap4A hydrolase family.

It carries out the reaction P(1),P(4)-bis(5'-adenosyl) tetraphosphate + H2O = 2 ADP + 2 H(+). Functionally, hydrolyzes diadenosine 5',5'''-P1,P4-tetraphosphate to yield ADP. In Acidovorax ebreus (strain TPSY) (Diaphorobacter sp. (strain TPSY)), this protein is Bis(5'-nucleosyl)-tetraphosphatase, symmetrical.